A 154-amino-acid polypeptide reads, in one-letter code: Protein LOL1 (154 aa).

Putative zinc finger stretches follow at residues 34–64 (QLVC…VTAV), 73–103 (QLVC…VNLA), and 111–141 (HVNC…VTSV).

It localises to the nucleus. Functionally, positive regulator of reactive oxygen-induced cell death. May be involved in the repression of the copper/zinc superoxide dismutase CSD1 and CSD2 that detoxify accumulating superoxide before the reactive oxygen species (ROS) can trigger a cell death cascade. LSD1 and LOL1 have antagonistic effects on CSD1 and CSD2 accumulation to regulate oxidative stress-induced cell death. The protein is Protein LOL1 (LOL1) of Arabidopsis thaliana (Mouse-ear cress).